The sequence spans 171 residues: Inosine/xanthosine triphosphatase (171 aa).

8–13 (TTNPAK) serves as a coordination point for substrate. 2 residues coordinate Mg(2+): Glu-38 and Gln-68.

It belongs to the YjjX NTPase family. Homodimer. It depends on Mg(2+) as a cofactor. The cofactor is Mn(2+).

The catalysed reaction is XTP + H2O = XDP + phosphate + H(+). It carries out the reaction ITP + H2O = IDP + phosphate + H(+). Functionally, phosphatase that hydrolyzes non-canonical purine nucleotides such as XTP and ITP to their respective diphosphate derivatives. Probably excludes non-canonical purines from DNA/RNA precursor pool, thus preventing their incorporation into DNA/RNA and avoiding chromosomal lesions. In Citrobacter koseri (strain ATCC BAA-895 / CDC 4225-83 / SGSC4696), this protein is Inosine/xanthosine triphosphatase.